Consider the following 290-residue polypeptide: Nucleotide-binding protein Aave_3603 (290 aa).

13-20 lines the ATP pocket; sequence GMSGSGKS. 62–65 lines the GTP pocket; it reads DVRS.

The protein belongs to the RapZ-like family.

Functionally, displays ATPase and GTPase activities. This chain is Nucleotide-binding protein Aave_3603, found in Paracidovorax citrulli (strain AAC00-1) (Acidovorax citrulli).